The sequence spans 455 residues: MGLSVVILAAGKGSRMNSNKPKVLQTLAAKTLIEHVVSSVEKLNPDNIVVVTGHLKEQVEDALQGRNITFVYQQQQLGTGHAVLQALPYLKEQKVLILYGDVPLISTEVLENLVDTTNDDDLGVLTAFVENPQGLGRIVRDKFGAVTEIVEEKDANDIQRQIKEINTGIYCVHKNLLQKWLPEIKANNVQKEYYLTDIITFAKADHVSINVTHPINEFEILGVNDRTQLASLERVWQRNVAEKIMAKGVSIADPNRFDVRGNLDVGKDCWIDINVIIKGNVKLGNNVVIGANCILKNCIIEDNVRIKSNSMVDGSIIREGAIVGPFARVRPECDVKEGAVIGNFVEAKKTILGKGSKASHLTYLGDSEIGANCNIGAGVITCNYDGVNKHKTVIGDYAFIGSDSQLIAPVNIGQGATVGAGSTIVKDVPADNLAISRARQRHIDTWQRSVKKTDK.

The pyrophosphorylase stretch occupies residues 1–226 (MGLSVVILAA…EFEILGVNDR (226 aa)). UDP-N-acetyl-alpha-D-glucosamine contacts are provided by residues 8-11 (LAAG), K22, Q73, 78-79 (GT), 99-101 (YGD), G136, E151, N166, and N224. Position 101 (D101) interacts with Mg(2+). N224 contributes to the Mg(2+) binding site. Residues 227-247 (TQLASLERVWQRNVAEKIMAK) form a linker region. Residues 248–455 (GVSIADPNRF…WQRSVKKTDK (208 aa)) are N-acetyltransferase. Residues R330 and K348 each coordinate UDP-N-acetyl-alpha-D-glucosamine. Catalysis depends on H360, which acts as the Proton acceptor. UDP-N-acetyl-alpha-D-glucosamine is bound by residues Y363 and N374. Acetyl-CoA-binding positions include A377, 383–384 (NY), S402, A420, and R437.

This sequence in the N-terminal section; belongs to the N-acetylglucosamine-1-phosphate uridyltransferase family. The protein in the C-terminal section; belongs to the transferase hexapeptide repeat family. In terms of assembly, homotrimer. Requires Mg(2+) as cofactor.

The protein resides in the cytoplasm. It catalyses the reaction alpha-D-glucosamine 1-phosphate + acetyl-CoA = N-acetyl-alpha-D-glucosamine 1-phosphate + CoA + H(+). The catalysed reaction is N-acetyl-alpha-D-glucosamine 1-phosphate + UTP + H(+) = UDP-N-acetyl-alpha-D-glucosamine + diphosphate. It functions in the pathway nucleotide-sugar biosynthesis; UDP-N-acetyl-alpha-D-glucosamine biosynthesis; N-acetyl-alpha-D-glucosamine 1-phosphate from alpha-D-glucosamine 6-phosphate (route II): step 2/2. Its pathway is nucleotide-sugar biosynthesis; UDP-N-acetyl-alpha-D-glucosamine biosynthesis; UDP-N-acetyl-alpha-D-glucosamine from N-acetyl-alpha-D-glucosamine 1-phosphate: step 1/1. The protein operates within bacterial outer membrane biogenesis; LPS lipid A biosynthesis. Functionally, catalyzes the last two sequential reactions in the de novo biosynthetic pathway for UDP-N-acetylglucosamine (UDP-GlcNAc). The C-terminal domain catalyzes the transfer of acetyl group from acetyl coenzyme A to glucosamine-1-phosphate (GlcN-1-P) to produce N-acetylglucosamine-1-phosphate (GlcNAc-1-P), which is converted into UDP-GlcNAc by the transfer of uridine 5-monophosphate (from uridine 5-triphosphate), a reaction catalyzed by the N-terminal domain. This chain is Bifunctional protein GlmU, found in Francisella tularensis subsp. tularensis (strain SCHU S4 / Schu 4).